Consider the following 836-residue polypeptide: Protein-glutamine gamma-glutamyltransferase K (836 aa).

Basic and acidic residues predominate over residues 1–33 (MDGPRSDMGRSDVSRSDMSRSDMGRSDMGRSDV). 2 disordered regions span residues 1–68 (MDGP…SRGG) and 89–125 (DDWG…DGTI). T46 bears the Phosphothreonine mark. Phosphoserine is present on residues S48, S98, and S112. The segment covering 89 to 112 (DDWGREPSDSRDRGSSSRGGRPDS) has biased composition (basic and acidic residues). Active-site residues include C397, H456, and D479. Ca(2+)-binding residues include N519, D521, E568, and E573. Residue S824 is modified to Phosphoserine.

Belongs to the transglutaminase superfamily. Transglutaminase family. In terms of assembly, interacts with PLAAT4. The cofactor is Ca(2+). In terms of processing, palmitoylated. Post-translationally, the membrane anchorage region possesses a cluster of five cysteines within which fatty acid(s) may become thioester-linked. It is subject to phorbol ester-stimulated phosphorylation and is hypersensitive to proteolysis, which releases the enzyme in a soluble form. Tyrosine-phosphorylated.

It localises to the membrane. It catalyses the reaction L-glutaminyl-[protein] + L-lysyl-[protein] = [protein]-L-lysyl-N(6)-5-L-glutamyl-[protein] + NH4(+). Its activity is regulated as follows. Inhibited by retinoic acid, but phorbol ester treatment activates it. In terms of biological role, catalyzes the cross-linking of proteins and the conjugation of polyamines to proteins. Responsible for cross-linking epidermal proteins during formation of the stratum corneum. Involved in cell proliferation. This is Protein-glutamine gamma-glutamyltransferase K (TGM1) from Oryctolagus cuniculus (Rabbit).